We begin with the raw amino-acid sequence, 114 residues long: Kita-kyushu lung cancer antigen 1 homolog (114 aa).

At M1–Y4 the chain is on the cytoplasmic side. The helical; Signal-anchor for type II membrane protein transmembrane segment at L5–Y22 threads the bilayer. Over R23–T114 the chain is Extracellular. A glycan (N-linked (GlcNAc...) asparagine) is linked at N84.

Its subcellular location is the cell membrane. The polypeptide is Kita-kyushu lung cancer antigen 1 homolog (CT83) (Macaca fascicularis (Crab-eating macaque)).